The chain runs to 151 residues: Ribosome maturation factor RimP (151 aa).

Belongs to the RimP family.

The protein localises to the cytoplasm. Required for maturation of 30S ribosomal subunits. The protein is Ribosome maturation factor RimP of Thermoanaerobacter sp. (strain X514).